A 258-amino-acid polypeptide reads, in one-letter code: Probable succinate transporter subunit YjjP (258 aa).

5 consecutive transmembrane segments (helical) span residues 116 to 137 (YPRW…KLNN), 143 to 160 (AVVT…RQLL), 171 to 191 (FCIT…LPAF), 197 to 217 (IAMA…NAVA), and 231 to 251 (WAIA…AMTM).

Belongs to the ThrE exporter (TC 2.A.79) family. The transporter is composed of YjjB and YjjP.

The protein localises to the cell inner membrane. Its function is as follows. Involved in succinate export with YjjB. Both proteins are required for export. Participates in succinate export, but also in the export of other dicarboxylates, such as fumarate and malate. Contributes to succinate production under both aerobic and anaerobic conditions, and increases fumarate and malate production during anaerobic succinate production. This is Probable succinate transporter subunit YjjP from Klebsiella aerogenes (strain ATCC 13048 / DSM 30053 / CCUG 1429 / JCM 1235 / KCTC 2190 / NBRC 13534 / NCIMB 10102 / NCTC 10006 / CDC 819-56) (Enterobacter aerogenes).